The primary structure comprises 112 residues: MNFDMSKLMQQAQKMQEQMKKAQQERENMEVIGESGAGLVTVTMTGKYDVKSVSIDNSLMSEDKEILEDLIAAAVNSAVKKVEENSTASSDIHKMAKDAGIDLPSGINFPFK.

The tract at residues 1-27 (MNFDMSKLMQQAQKMQEQMKKAQQERE) is disordered. Residues 17-27 (EQMKKAQQERE) show a composition bias toward basic and acidic residues.

The protein belongs to the YbaB/EbfC family. Homodimer.

It localises to the cytoplasm. The protein resides in the nucleoid. In terms of biological role, binds to DNA and alters its conformation. May be involved in regulation of gene expression, nucleoid organization and DNA protection. In Francisella tularensis subsp. novicida (strain U112), this protein is Nucleoid-associated protein FTN_1196.